Reading from the N-terminus, the 334-residue chain is Malate dehydrogenase, cytoplasmic (334 aa).

Ser-2 bears the N-acetylserine mark. NAD(+)-binding positions include 11–17 and Asp-42; that span reads GAAGQIA. Residues Arg-92 and Arg-98 each contribute to the substrate site. Asn-105 is an NAD(+) binding site. Lys-110 is modified (N6-succinyllysine). Residue Gln-112 coordinates NAD(+). An N6-acetyllysine mark is found at Lys-118 and Lys-121. Position 129–131 (129–131) interacts with NAD(+); sequence VGN. Residues Asn-131 and Arg-162 each contribute to the substrate site. Residue His-187 is the Proton acceptor of the active site. Lys-214 is modified (N6-succinyllysine). Ser-217 carries the phosphoserine modification. Arg-230 is modified (omega-N-methylarginine). Position 241 is a phosphoserine (Ser-241). An N6-acetyllysine; alternate modification is found at Lys-298. Lys-298 carries the post-translational modification N6-succinyllysine; alternate. Ser-309 carries the post-translational modification Phosphoserine. N6-succinyllysine is present on Lys-318. Phosphoserine occurs at positions 332 and 333.

It belongs to the LDH/MDH superfamily. MDH type 2 family. As to quaternary structure, homodimer. In terms of processing, ISGylated. Post-translationally, acetylation at Lys-118 dramatically enhances enzymatic activity and promotes adipogenic differentiation.

It is found in the cytoplasm. It localises to the cytosol. The enzyme catalyses (S)-malate + NAD(+) = oxaloacetate + NADH + H(+). The catalysed reaction is (2R)-2-hydroxy-3-(4-hydroxyphenyl)propanoate + NAD(+) = 3-(4-hydroxyphenyl)pyruvate + NADH + H(+). It catalyses the reaction (S)-2-hydroxyglutarate + NAD(+) = 2-oxoglutarate + NADH + H(+). Functionally, catalyzes the reduction of aromatic alpha-keto acids in the presence of NADH. Plays essential roles in the malate-aspartate shuttle and the tricarboxylic acid cycle, important in mitochondrial NADH supply for oxidative phosphorylation. Catalyzes the reduction of 2-oxoglutarate to 2-hydroxyglutarate, leading to elevated reactive oxygen species (ROS). This Felis catus (Cat) protein is Malate dehydrogenase, cytoplasmic (MDH1).